The primary structure comprises 115 residues: DNA-directed RNA polymerase II subunit RPB11-b1 (115 aa).

The protein belongs to the archaeal Rpo11/eukaryotic RPB11/RPC19 RNA polymerase subunit family. In terms of assembly, component of the RNA polymerase II (Pol II) complex consisting of 12 subunits. In terms of tissue distribution, ubiquitously expressed.

The protein localises to the nucleus. In terms of biological role, DNA-dependent RNA polymerase catalyzes the transcription of DNA into RNA using the four ribonucleoside triphosphates as substrates. Component of RNA polymerase II which synthesizes mRNA precursors and many functional non-coding RNAs. Pol II is the central component of the basal RNA polymerase II transcription machinery. It is composed of mobile elements that move relative to each other. RPB11 is part of the core element with the central large cleft. This is DNA-directed RNA polymerase II subunit RPB11-b1 (POLR2J2) from Homo sapiens (Human).